The following is a 434-amino-acid chain: Probable glucuronosyltransferase Os02g0520750 (434 aa).

At 1-10 (MVGARAGRVP) the chain is on the cytoplasmic side. A helical; Signal-anchor for type II membrane protein transmembrane segment spans residues 11 to 31 (AAAAAAAAVLIVAACVFSSLA). Residues 32–434 (GAAAAAEVVG…GPVADLKPWK (403 aa)) are Lumenal-facing. 2 N-linked (GlcNAc...) asparagine glycosylation sites follow: Asn160 and Asn421.

Belongs to the glycosyltransferase 47 family.

The protein resides in the golgi apparatus membrane. In terms of biological role, involved in the synthesis of glucuronoxylan hemicellulose in secondary cell walls. This chain is Probable glucuronosyltransferase Os02g0520750, found in Oryza sativa subsp. japonica (Rice).